A 714-amino-acid chain; its full sequence is Fatty acid oxidation complex subunit alpha (714 aa).

The enoyl-CoA hydratase stretch occupies residues 1–190 (MDMTSAFTLN…KSGLVDEIVP (190 aa)). The interval 306-714 (GTLDSIGILG…FWKTSATDRH (409 aa)) is 3-hydroxyacyl-CoA dehydrogenase.

In the N-terminal section; belongs to the enoyl-CoA hydratase/isomerase family. It in the central section; belongs to the 3-hydroxyacyl-CoA dehydrogenase family. As to quaternary structure, heterotetramer of two alpha chains (FadJ) and two beta chains (FadI).

The protein resides in the cytoplasm. The enzyme catalyses a (3S)-3-hydroxyacyl-CoA = a (2E)-enoyl-CoA + H2O. The catalysed reaction is a 4-saturated-(3S)-3-hydroxyacyl-CoA = a (3E)-enoyl-CoA + H2O. It catalyses the reaction a (3S)-3-hydroxyacyl-CoA + NAD(+) = a 3-oxoacyl-CoA + NADH + H(+). It carries out the reaction (3S)-3-hydroxybutanoyl-CoA = (3R)-3-hydroxybutanoyl-CoA. It participates in lipid metabolism; fatty acid beta-oxidation. In terms of biological role, catalyzes the formation of a hydroxyacyl-CoA by addition of water on enoyl-CoA. Also exhibits 3-hydroxyacyl-CoA epimerase and 3-hydroxyacyl-CoA dehydrogenase activities. The chain is Fatty acid oxidation complex subunit alpha from Escherichia fergusonii (strain ATCC 35469 / DSM 13698 / CCUG 18766 / IAM 14443 / JCM 21226 / LMG 7866 / NBRC 102419 / NCTC 12128 / CDC 0568-73).